A 99-amino-acid polypeptide reads, in one-letter code: Small integral membrane protein 14 (99 aa).

Over 1–49 the chain is Lumenal; the sequence is MAEGGFDPCECVCSHEHAMRRLINLLRQSQSYCTDTECLQELPGPSGDN. The chain crosses the membrane as a helical span at residues 50-70; the sequence is GISVTMILVAWMVIALILFLL. Residues 71-99 lie on the Cytoplasmic side of the membrane; that stretch reads RPPNLRGSNLPGKPTSPHNGQDPPAPPVD. A disordered region spans residues 77 to 99; that stretch reads GSNLPGKPTSPHNGQDPPAPPVD.

The protein localises to the endoplasmic reticulum membrane. This chain is Small integral membrane protein 14 (SMIM14), found in Pongo abelii (Sumatran orangutan).